Here is a 350-residue protein sequence, read N- to C-terminus: Vetispiradiene synthase 3 (350 aa).

The Mg(2+) site is built by Asp103, Asp107, Asp246, Thr250, and Glu254. The DDXXD motif signature appears at 103–107 (DDTFD).

The protein belongs to the terpene synthase family. Tpsa subfamily. Mg(2+) serves as cofactor.

It is found in the cytoplasm. The catalysed reaction is (2E,6E)-farnesyl diphosphate = (-)-vetispiradiene + diphosphate. The protein operates within secondary metabolite biosynthesis; terpenoid biosynthesis. In terms of biological role, sesquiterpene synthase that catalyzes the formation of vetispiradiene from trans,trans-farnesyl diphosphate. The initial internal cyclization produces the monocyclic intermediate germacrene A. This is Vetispiradiene synthase 3 from Hyoscyamus muticus (Egyptian henbane).